The chain runs to 453 residues: GTPase Der (453 aa).

EngA-type G domains are found at residues 3 to 167 (PIIV…ISEK) and 187 to 360 (IKVA…EDSK). GTP-binding positions include 9–16 (GRTNVGKS), 57–61 (DTAGL), 119–122 (NKID), 193–200 (GRPNVGKS), 240–244 (DTAGA), and 305–308 (NKCD). Residues 361–445 (RKISTSTLIR…PIQIQFKDNE (85 aa)) form the KH-like domain.

It belongs to the TRAFAC class TrmE-Era-EngA-EngB-Septin-like GTPase superfamily. EngA (Der) GTPase family. In terms of assembly, associates with the 50S ribosomal subunit.

GTPase that plays an essential role in the late steps of ribosome biogenesis. The protein is GTPase Der of Buchnera aphidicola subsp. Acyrthosiphon pisum (strain Tuc7).